The primary structure comprises 202 residues: Neuroligin-3 (202 aa).

Residues Arg1 to Trp202 are Extracellular-facing. Cysteines 15 and 49 form a disulfide. An N-linked (GlcNAc...) asparagine glycan is attached at Asn50. The interval Leu154–Trp202 is disordered.

Belongs to the type-B carboxylesterase/lipase family. Homodimer, and heterodimer with NLGN1 and NLGN2. Interacts with neurexins NRXN1, NRXN2 and NRXN3. Interaction with neurexins is mediated by heparan sulfate glycan modification on neurexin. Interacts (via its C-terminus) with DLG4/PSD-95 (via PDZ domain 3).

The protein resides in the cell membrane. The protein localises to the synapse. Its function is as follows. Cell surface protein involved in cell-cell-interactions via its interactions with neurexin family members. Plays a role in synapse function and synaptic signal transmission, and probably mediates its effects by recruiting and clustering other synaptic proteins. May promote the initial formation of synapses, but is not essential for this. May also play a role in glia-glia or glia-neuron interactions in the developing peripheral nervous system. The chain is Neuroligin-3 (NLGN3) from Macaca mulatta (Rhesus macaque).